The sequence spans 146 residues: Sperm surface protein Sp17 (146 aa).

Positions glutamate 76–serine 88 are enriched in basic and acidic residues. Positions glutamate 76–lysine 109 are disordered. The segment covering threonine 92–aspartate 108 has biased composition (acidic residues). The 30-residue stretch at glutamate 110–glutamate 139 folds into the IQ domain.

Homodimer. May interact with ROPN1. In terms of processing, the N-terminus is blocked. As to expression, testis- and sperm-specific.

It is found in the membrane. In terms of biological role, sperm surface zona pellucida binding protein. Helps to bind spermatozoa to the zona pellucida with high affinity. Might function in binding zona pellucida and carbohydrates. The polypeptide is Sperm surface protein Sp17 (SPA17) (Oryctolagus cuniculus (Rabbit)).